We begin with the raw amino-acid sequence, 369 residues long: Thyroid hormone receptor beta (369 aa).

The segment at 1 to 14 (MSGYIPSYLDKDEL) is modulating. Residues cysteine 15, cysteine 18, cysteine 32, cysteine 35, cysteine 53, cysteine 59, cysteine 69, and cysteine 72 each coordinate Zn(2+). 2 NR C4-type zinc fingers span residues 15-35 (CVVCGDKATGYHYRCITCEGC) and 53-77 (CKYEGKCVIDKVTRNQCQECRFKKC). The segment at residues 15 to 89 (CVVCGDKATG…VGMATDLVLD (75 aa)) is a DNA-binding region (nuclear receptor). The region spanning 125 to 369 (EEWELIKIVT…PPLFLEVFED (245 aa)) is the NR LBD domain. 3 residues coordinate 3,3',5-triiodo-L-thyronine: arginine 190, asparagine 239, and histidine 343. L-thyroxine is bound by residues arginine 190, asparagine 239, and histidine 343.

This sequence belongs to the nuclear hormone receptor family. NR1 subfamily.

The protein localises to the nucleus. Its function is as follows. Nuclear hormone receptor that can act as a repressor or activator of transcription. High affinity receptor for thyroid hormones, including triiodothyronine and thyroxine. The polypeptide is Thyroid hormone receptor beta (THRB) (Cairina moschata (Muscovy duck)).